Consider the following 285-residue polypeptide: Phosphatidylglycerol--prolipoprotein diacylglyceryl transferase (285 aa).

4 helical membrane-spanning segments follow: residues 30–50 (LEIR…HWHI), 67–87 (LMLW…ILLY), 103–123 (WHGG…VSIV), and 129–149 (VRVM…LFLG). Residue Arg-150 coordinates a 1,2-diacyl-sn-glycero-3-phospho-(1'-sn-glycerol). The next 3 membrane-spanning stretches (helical) occupy residues 184 to 204 (SQVY…SILA), 213 to 233 (FGVL…AVEF), and 252 to 272 (GQVL…LTVL).

The protein belongs to the Lgt family.

Its subcellular location is the cell inner membrane. It carries out the reaction L-cysteinyl-[prolipoprotein] + a 1,2-diacyl-sn-glycero-3-phospho-(1'-sn-glycerol) = an S-1,2-diacyl-sn-glyceryl-L-cysteinyl-[prolipoprotein] + sn-glycerol 1-phosphate + H(+). The protein operates within protein modification; lipoprotein biosynthesis (diacylglyceryl transfer). Functionally, catalyzes the transfer of the diacylglyceryl group from phosphatidylglycerol to the sulfhydryl group of the N-terminal cysteine of a prolipoprotein, the first step in the formation of mature lipoproteins. The protein is Phosphatidylglycerol--prolipoprotein diacylglyceryl transferase of Anaplasma marginale (strain Florida).